We begin with the raw amino-acid sequence, 749 residues long: Probable serine/threonine-protein kinase fhkD (749 aa).

Positions 47–150 constitute an FHA domain; it reads IFFGRNPKRC…NGTFVKGCIL (104 aa). Residues 84–126 show a composition bias toward low complexity; sequence NNNNNDGDNNNNNNNNNNNNNNNNNNNNNNNNNNNNNNNNNNN. The disordered stretch occupies residues 84–130; that stretch reads NNNNNDGDNNNNNNNNNNNNNNNNNNNNNNNNNNNNNNNNNNNTTKN. Positions 199–472 constitute a Protein kinase domain; sequence YSIQGILGTG…TKGALSHDWF (274 aa). Residues 205-213 and K228 contribute to the ATP site; that span reads LGTGNFSVV. Residue D323 is the Proton acceptor of the active site. 2 disordered regions span residues 512 to 620 and 640 to 749; these read NIPM…PAII and CTPT…LKGS. Residues 516–561 show a composition bias toward low complexity; it reads TLNSTTTNTTSPNNNNNNNNNNNNKNNNKNIIKSLNSNSNNYNNNS. Over residues 562-572 the composition is skewed to polar residues; it reads VLKKTSQSPKT. Low complexity-rich tracts occupy residues 590 to 611 and 651 to 667; these read NNNN…NNNN and TNST…TSNS. Positions 668 to 687 are enriched in polar residues; that stretch reads VTMGTSSTSIPVSNSITMKS. A compositionally biased stretch (basic and acidic residues) spans 696–707; it reads DGDKKRKEKESS. Positions 708–739 are enriched in low complexity; it reads SSENVNDVIVINSNNHNNNNNNNHNINNGISS.

The protein belongs to the protein kinase superfamily. CAMK Ser/Thr protein kinase family. CHK2 subfamily.

The catalysed reaction is L-seryl-[protein] + ATP = O-phospho-L-seryl-[protein] + ADP + H(+). The enzyme catalyses L-threonyl-[protein] + ATP = O-phospho-L-threonyl-[protein] + ADP + H(+). This chain is Probable serine/threonine-protein kinase fhkD (fhkD), found in Dictyostelium discoideum (Social amoeba).